The following is a 776-amino-acid chain: Protein translocase subunit SecA 2 (776 aa).

ATP-binding positions include Gln80, 98–102 (GEGKT), and Asp486.

It belongs to the SecA family. In terms of assembly, monomer and homodimer. Part of the essential Sec protein translocation apparatus which comprises SecA, SecYEG and auxiliary proteins SecDF. Other proteins may also be involved.

It localises to the cell membrane. The protein localises to the cytoplasm. The enzyme catalyses ATP + H2O + cellular proteinSide 1 = ADP + phosphate + cellular proteinSide 2.. Functionally, part of the Sec protein translocase complex. Interacts with the SecYEG preprotein conducting channel. Has a central role in coupling the hydrolysis of ATP to the transfer of proteins into and across the cell membrane, serving as an ATP-driven molecular motor driving the stepwise translocation of polypeptide chains across the membrane. This Listeria welshimeri serovar 6b (strain ATCC 35897 / DSM 20650 / CCUG 15529 / CIP 8149 / NCTC 11857 / SLCC 5334 / V8) protein is Protein translocase subunit SecA 2.